A 339-amino-acid chain; its full sequence is Ketol-acid reductoisomerase (NADP(+)) (339 aa).

Residues 1 to 182 form the KARI N-terminal Rossmann domain; sequence MRVYYDRDAD…GGGRSGVIET (182 aa). NADP(+) contacts are provided by residues 24-27, Arg48, Ser51, Thr53, and 83-86; these read YGSQ and DELQ. Residue His108 is part of the active site. Gly134 contributes to the NADP(+) binding site. A KARI C-terminal knotted domain is found at 183–328; the sequence is TFKEECETDL…GKLRAMMPWI (146 aa). Mg(2+)-binding residues include Asp191, Glu195, Glu227, and Glu231. Substrate is bound at residue Ser252.

It belongs to the ketol-acid reductoisomerase family. It depends on Mg(2+) as a cofactor.

The catalysed reaction is (2R)-2,3-dihydroxy-3-methylbutanoate + NADP(+) = (2S)-2-acetolactate + NADPH + H(+). It catalyses the reaction (2R,3R)-2,3-dihydroxy-3-methylpentanoate + NADP(+) = (S)-2-ethyl-2-hydroxy-3-oxobutanoate + NADPH + H(+). It functions in the pathway amino-acid biosynthesis; L-isoleucine biosynthesis; L-isoleucine from 2-oxobutanoate: step 2/4. It participates in amino-acid biosynthesis; L-valine biosynthesis; L-valine from pyruvate: step 2/4. In terms of biological role, involved in the biosynthesis of branched-chain amino acids (BCAA). Catalyzes an alkyl-migration followed by a ketol-acid reduction of (S)-2-acetolactate (S2AL) to yield (R)-2,3-dihydroxy-isovalerate. In the isomerase reaction, S2AL is rearranged via a Mg-dependent methyl migration to produce 3-hydroxy-3-methyl-2-ketobutyrate (HMKB). In the reductase reaction, this 2-ketoacid undergoes a metal-dependent reduction by NADPH to yield (R)-2,3-dihydroxy-isovalerate. The polypeptide is Ketol-acid reductoisomerase (NADP(+)) (Brucella abortus (strain S19)).